The chain runs to 160 residues: DNA polymerase delta subunit 4 (160 aa).

Residues 1–48 (MKKRTTQAKKSGQNTNIRDVFPHVVRSNSSQSHIGKKVSSEQSPTPDV) are disordered. Polar residues predominate over residues 8-17 (AKKSGQNTNI).

Belongs to the DNA polymerase delta subunit 4 family. As to quaternary structure, heterotetramer that consist of the pol3, cdc1, cdc27 and cdm1 subunits. Interacts with cdc1 and pol3.

The protein localises to the nucleus. Appears to have a role in the stabilization of the DNA polymerase delta complex. In Schizosaccharomyces pombe (strain 972 / ATCC 24843) (Fission yeast), this protein is DNA polymerase delta subunit 4 (cdm1).